Consider the following 556-residue polypeptide: Formate--tetrahydrofolate ligase (556 aa).

65–72 contacts ATP; that stretch reads TPAGEGKS.

This sequence belongs to the formate--tetrahydrofolate ligase family.

The catalysed reaction is (6S)-5,6,7,8-tetrahydrofolate + formate + ATP = (6R)-10-formyltetrahydrofolate + ADP + phosphate. It functions in the pathway one-carbon metabolism; tetrahydrofolate interconversion. This chain is Formate--tetrahydrofolate ligase, found in Streptococcus thermophilus (strain CNRZ 1066).